We begin with the raw amino-acid sequence, 462 residues long: Argininosuccinate lyase (462 aa).

Belongs to the lyase 1 family. Argininosuccinate lyase subfamily.

The protein localises to the cytoplasm. It carries out the reaction 2-(N(omega)-L-arginino)succinate = fumarate + L-arginine. It functions in the pathway amino-acid biosynthesis; L-arginine biosynthesis; L-arginine from L-ornithine and carbamoyl phosphate: step 3/3. In Rippkaea orientalis (strain PCC 8801 / RF-1) (Cyanothece sp. (strain PCC 8801)), this protein is Argininosuccinate lyase.